A 399-amino-acid chain; its full sequence is RNA-binding protein cabeza (399 aa).

The span at 1–12 (MERGGYGGGSGQ) shows a compositional bias: gly residues. The tract at residues 1–82 (MERGGYGGGS…RGGNSYGNGG (82 aa)) is disordered. Positions 24-34 (YQQMPNKTGNY) are enriched in polar residues. The segment covering 43–69 (KQGGGYDSGSGHRGSGGSGNGGGGGGS) has biased composition (gly residues). The 87-residue stretch at 120-206 (DTIFVSGMDP…NAIKVSLAQR (87 aa)) folds into the RRM domain. 2 disordered regions span residues 209–276 (NWNK…QPRD) and 300–399 (TPKG…SRPY). Residues 212–271 (KGGGGGGGGGGRGGFGGRRGGGGGGGGGGGGGGRFDRGGGGGGGRYDRGGGGGGGGGGGN) are compositionally biased toward gly residues. The segment at 275–304 (RDGDWKCNSCNNTNFAWRNECNRCKTPKGD) adopts a RanBP2-type zinc-finger fold. Composition is skewed to gly residues over residues 308-339 (SSGGGGGGGYGGGGGGGGYDRGNDRGSGGGGY), 347-361 (NSQGGGGGGGGGGGY), and 368-380 (NGGGRGGRGGGGG). The segment covering 387-399 (PMRNDGGMRSRPY) has biased composition (low complexity).

Belongs to the RRM TET family. In terms of tissue distribution, ubiquitous. Enriched in the brain and central nervous system during embryogenesis. Enriched in the adult head. Embryos contain both isoforms A and B, whereas later in development (heads and torsos) only isoform B is detected.

It localises to the nucleus. In terms of biological role, may participate in a function common to the expression of most genes transcribed by RNA polymerase II. This is RNA-binding protein cabeza (caz) from Drosophila melanogaster (Fruit fly).